We begin with the raw amino-acid sequence, 496 residues long: Glycylpeptide N-tetradecanoyltransferase 1 (496 aa).

The segment at 1-82 (MADESETAVK…STQDQPVKMT (82 aa)) is disordered. A phosphoserine mark is found at serine 31 and serine 47. Basic residues predominate over residues 55–66 (KKKKKKQKKKKE). The residue at position 83 (serine 83) is a Phosphoserine. Tetradecanoyl-CoA-binding residues include glutamine 118, phenylalanine 119, tryptophan 120, phenylalanine 247, leucine 248, cysteine 249, valine 250, serine 256, arginine 258, valine 259, and alanine 260.

The protein belongs to the NMT family. As to expression, ubiquitous.

Its subcellular location is the cytoplasm. It localises to the cytosol. The protein resides in the membrane. It catalyses the reaction N-terminal glycyl-[protein] + tetradecanoyl-CoA = N-tetradecanoylglycyl-[protein] + CoA + H(+). The enzyme catalyses N-terminal glycyl-L-lysyl-[protein] + tetradecanoyl-CoA = N-terminal glycyl-(N(6)-tetradecanoyl)-L-lysyl-[protein] + CoA + H(+). Functionally, adds a myristoyl group to the N-terminal glycine residue of certain cellular and viral proteins. Also able to mediate N-terminal lysine myristoylation of proteins: catalyzes myristoylation of ARF6 on both 'Gly-2' and 'Lys-3'. Lysine myristoylation is required to maintain ARF6 on membranes during the GTPase cycle. Required for normal embryogenesis. The chain is Glycylpeptide N-tetradecanoyltransferase 1 from Mus musculus (Mouse).